The primary structure comprises 351 residues: Methionine import ATP-binding protein MetN (351 aa).

An ABC transporter domain is found at 2 to 247 (ITTSGLTKVY…PGSELAAALF (246 aa)). 38–45 (GQSGAGKS) provides a ligand contact to ATP.

The protein belongs to the ABC transporter superfamily. Methionine importer (TC 3.A.1.24) family. In terms of assembly, the complex is composed of two ATP-binding proteins (MetN), two transmembrane proteins (MetI) and a solute-binding protein (MetQ).

The protein localises to the cell membrane. It carries out the reaction L-methionine(out) + ATP + H2O = L-methionine(in) + ADP + phosphate + H(+). It catalyses the reaction D-methionine(out) + ATP + H2O = D-methionine(in) + ADP + phosphate + H(+). Its function is as follows. Part of the ABC transporter complex MetNIQ involved in methionine import. Responsible for energy coupling to the transport system. The protein is Methionine import ATP-binding protein MetN of Streptomyces coelicolor (strain ATCC BAA-471 / A3(2) / M145).